Consider the following 512-residue polypeptide: Phosphoenolpyruvate carboxylase (512 aa).

The protein belongs to the PEPCase type 2 family. In terms of assembly, homotetramer. Mg(2+) is required as a cofactor.

The catalysed reaction is oxaloacetate + phosphate = phosphoenolpyruvate + hydrogencarbonate. Its function is as follows. Catalyzes the irreversible beta-carboxylation of phosphoenolpyruvate (PEP) to form oxaloacetate (OAA), a four-carbon dicarboxylic acid source for the tricarboxylic acid cycle. This chain is Phosphoenolpyruvate carboxylase, found in Caldivirga maquilingensis (strain ATCC 700844 / DSM 13496 / JCM 10307 / IC-167).